We begin with the raw amino-acid sequence, 169 residues long: Disulfide bond formation protein B (169 aa).

Topologically, residues 1 to 14 (MMRFLNHCSQGRSA) are cytoplasmic. Residues 15-31 (WLLMILTALILESSALY) form a helical membrane-spanning segment. Over 32–49 (FQHVMKLQPCVMCIYERV) the chain is Periplasmic. A disulfide bridge connects residues C41 and C44. A helical transmembrane segment spans residues 50–65 (ALFGVLSAGILGVIAP). The Cytoplasmic segment spans residues 66-71 (KTPLRW). Residues 72–89 (LAIILWIYSAWGGLQLAW) form a helical membrane-spanning segment. Topologically, residues 90-144 (QHTMMQLHPSPFNTCDFFVNFPSWLALNQWLPSVFEATGDCSVRQWQFLTLEMPQ) are periplasmic. A disulfide bridge connects residues C104 and C130. The chain crosses the membrane as a helical span at residues 145–163 (WLVGIFAAYLVVAALVLIS). The Cytoplasmic segment spans residues 164–169 (QFFSRK).

The protein belongs to the DsbB family.

The protein resides in the cell inner membrane. In terms of biological role, required for disulfide bond formation in some periplasmic proteins. Acts by oxidizing the DsbA protein. This Photorhabdus laumondii subsp. laumondii (strain DSM 15139 / CIP 105565 / TT01) (Photorhabdus luminescens subsp. laumondii) protein is Disulfide bond formation protein B.